The primary structure comprises 513 residues: ATP synthase subunit alpha (513 aa).

Residue 169-176 coordinates ATP; sequence GDRQTGKT.

This sequence belongs to the ATPase alpha/beta chains family. In terms of assembly, F-type ATPases have 2 components, CF(1) - the catalytic core - and CF(0) - the membrane proton channel. CF(1) has five subunits: alpha(3), beta(3), gamma(1), delta(1), epsilon(1). CF(0) has three main subunits: a(1), b(2) and c(9-12). The alpha and beta chains form an alternating ring which encloses part of the gamma chain. CF(1) is attached to CF(0) by a central stalk formed by the gamma and epsilon chains, while a peripheral stalk is formed by the delta and b chains.

It localises to the cell inner membrane. It carries out the reaction ATP + H2O + 4 H(+)(in) = ADP + phosphate + 5 H(+)(out). Functionally, produces ATP from ADP in the presence of a proton gradient across the membrane. The alpha chain is a regulatory subunit. The sequence is that of ATP synthase subunit alpha from Ralstonia nicotianae (strain ATCC BAA-1114 / GMI1000) (Ralstonia solanacearum).